The following is a 253-amino-acid chain: Protein phosphatase CheZ (253 aa).

The segment at 1–84 (MTQEELDALM…EWPPPPPTEE (84 aa)) is disordered. Residues 21–69 (LETKEETKEEAKEEAKEEAKEEAKEKEEIKEESSSQKMTVKKEDAEKYG) are compositionally biased toward basic and acidic residues.

Belongs to the CheZ family. In terms of assembly, interacts with ChePep; this interaction is essential for each other polar localization.

It is found in the cytoplasm. In terms of biological role, plays an important role in bacterial chemotaxis signal transduction pathway by accelerating the dephosphorylation of phosphorylated CheY (CheY-P). Also dephosphorylates CheV2 but not CheV1 or CheV3. In addition, forms a distinct chemotaxis regulatory complex with ChePep independently of the core chemotaxis signaling proteins. The polypeptide is Protein phosphatase CheZ (Helicobacter pylori (strain ATCC 700392 / 26695) (Campylobacter pylori)).